A 342-amino-acid chain; its full sequence is MRTNKVIHVIGVHAEGEVGDVIVGGVSPPPGDTLWEQSRFIASDETLRNFVLNEPRGGVFRHVNLLVPPKDPRAQMGFIIMEPADTPPMSGSNSICVSTAILDSGIISMQEPLTHMVLEAPGGVIEVTAECANGKAERINVLNVASFVTRLAAALEVEGLGTLTVDTAYGGDSFVIVDAIGLGFSLKPDEARELAELGMKITAAANEQLGFVHPCNADWNHISFCQMTTPITRENGILTGKSAVAIRPGKIDRSPTGTGCSARLAVMHARGEIGIGETYIGRSIIDSEFKCHIDSLTEIGGLSAIRPVISGRAWITGVSQLMLDPTDPWPSGYQLSDTWPAI.

Ser90 (proton acceptor) is an active-site residue. Substrate contacts are provided by residues 91–92, Asp252, and 257–258; these read GS and GT.

It belongs to the proline racemase family.

It carries out the reaction trans-3-hydroxy-L-proline = 1-pyrroline-2-carboxylate + H2O. Its function is as follows. Catalyzes the dehydration of trans-3-hydroxy-L-proline (t3LHyp) to Delta(1)-pyrroline-2-carboxylate (Pyr2C). Is likely involved in a degradation pathway that converts t3LHyp to L-proline. Displays neither proline racemase activity nor 4-hydroxyproline 2-epimerase activity. This Allorhizobium ampelinum (strain ATCC BAA-846 / DSM 112012 / S4) (Agrobacterium vitis (strain S4)) protein is Trans-3-hydroxy-L-proline dehydratase.